We begin with the raw amino-acid sequence, 483 residues long: MAPEMEEGTLEIGMEYRTVSGVAGPLVILDKVKGPKYQEIVNIRLGDGTTRRGQVLEVDGEKAVVQVFEGTSGIDNKYTTVQFTGEVLKTPVSLDMLGRIFNGSGKPIDNGPPILPEAYLDISGSSINPSERTYPEEMIQTGISTIDVMNSIARGQKIPLFSAAGLPHNEIAAQICRQAGLVKRLEQSKHAAEGGEEDNFAIVFAAMGVNMETAQFFKRDFEENGSMERVTLFLNLANDPTIERIITPRIALTTAEYLAYECGKHVLVILTDMSSYADALREVSAAREEVPGRRGYPGYMYTDLATIYERAGRIEGRKGSITQIPILTMPNDDITHPTPDLTGYITEGQIYIDRQLHNRQIYPPINVLPSLSRLMKSAIGEGMTRRDHSDVSNQLYANYAIGKDVQAMKAVVGEEALSSEDLLYLEFLDKFERKFVAQGAYDTRNIFQSLDLAWTLLRIFPRELLHRIPAKTLDQFYSRDATH.

Belongs to the ATPase alpha/beta chains family. In terms of assembly, V-ATPase is a heteromultimeric enzyme composed of a peripheral catalytic V1 complex (main components: subunits A, B, C, D, E, and F) attached to an integral membrane V0 proton pore complex (main component: the proteolipid protein).

Functionally, non-catalytic subunit of the peripheral V1 complex of vacuolar ATPase. V-ATPase is responsible for acidifying a variety of intracellular compartments in eukaryotic cells. This is V-type proton ATPase subunit B 2 from Hordeum vulgare (Barley).